Consider the following 499-residue polypeptide: Phenylalanine--tRNA ligase alpha subunit (499 aa).

Residues T342, Q381 to D383, and F422 each bind L-phenylalanine. Residue E424 coordinates Mg(2+). L-phenylalanine is bound at residue F447.

This sequence belongs to the class-II aminoacyl-tRNA synthetase family. Phe-tRNA synthetase alpha subunit type 2 subfamily. As to quaternary structure, tetramer of two alpha and two beta subunits. Requires Mg(2+) as cofactor.

It is found in the cytoplasm. The catalysed reaction is tRNA(Phe) + L-phenylalanine + ATP = L-phenylalanyl-tRNA(Phe) + AMP + diphosphate + H(+). The polypeptide is Phenylalanine--tRNA ligase alpha subunit (Thermococcus gammatolerans (strain DSM 15229 / JCM 11827 / EJ3)).